The sequence spans 173 residues: Transcription factor E (173 aa).

The region spanning 3–86 is the HTH TFE/IIEalpha-type domain; the sequence is DDPLVKSLLT…SWKFEEQEVI (84 aa).

The protein belongs to the TFE family. Monomer. Interaction with RNA polymerase subunits RpoF and RpoE is necessary for Tfe stimulatory transcription activity. Able to interact with Tbp and RNA polymerase in the absence of DNA promoter. Interacts both with the preinitiation and elongation complexes.

Functionally, transcription factor that plays a role in the activation of archaeal genes transcribed by RNA polymerase. Facilitates transcription initiation by enhancing TATA-box recognition by TATA-box-binding protein (Tbp), and transcription factor B (Tfb) and RNA polymerase recruitment. Not absolutely required for transcription in vitro, but particularly important in cases where Tbp or Tfb function is not optimal. It dynamically alters the nucleic acid-binding properties of RNA polymerases by stabilizing the initiation complex and destabilizing elongation complexes. Seems to translocate with the RNA polymerase following initiation and acts by binding to the non template strand of the transcription bubble in elongation complexes. The sequence is that of Transcription factor E from Methanobrevibacter smithii (strain ATCC 35061 / DSM 861 / OCM 144 / PS).